The sequence spans 184 residues: Peptidoglycan-recognition protein SC2 (184 aa).

The N-terminal stretch at 1-20 (MANKALILLAVLFCAQAVLG) is a signal peptide. An N-acetylmuramoyl-L-alanine amidase domain is found at 45 to 169 (SYAVIHHTAG…RQVGSTECPG (125 aa)). His50 is a binding site for Zn(2+). An intrachain disulfide couples Cys57 to Cys63. The Zn(2+) site is built by His159 and Cys167.

It belongs to the N-acetylmuramoyl-L-alanine amidase 2 family. Zn(2+) serves as cofactor. As to expression, constitutively expressed at high level in gut, in addition to the induced expression in fat body.

The protein resides in the secreted. The catalysed reaction is Hydrolyzes the link between N-acetylmuramoyl residues and L-amino acid residues in certain cell-wall glycopeptides.. Its function is as follows. N-acetylmuramyl-L-alanine amidase involved in innate immunity by degrading bacterial peptidoglycans (PGN). Probably plays a scavenger role by digesting biologically active PGN into biologically inactive fragments. Has no direct bacteriolytic activity. The sequence is that of Peptidoglycan-recognition protein SC2 (PGRP-SC2) from Drosophila melanogaster (Fruit fly).